Here is a 255-residue protein sequence, read N- to C-terminus: Tritrans,polycis-undecaprenyl-diphosphate synthase (geranylgeranyl-diphosphate specific) (255 aa).

Residue aspartate 34 is part of the active site. Aspartate 34 is a Mg(2+) binding site. Substrate contacts are provided by residues 35 to 38 (GNRR), histidine 51, and 79 to 81 (STE). The active-site Proton acceptor is asparagine 82. Residues phenylalanine 83, arginine 85, arginine 204, and 210-212 (RIS) contribute to the substrate site. Glutamate 223 is a Mg(2+) binding site.

It belongs to the UPP synthase family. In terms of assembly, homodimer. It depends on Mg(2+) as a cofactor.

The enzyme catalyses geranylgeranyl diphosphate + 7 isopentenyl diphosphate = tri-trans,hepta-cis-undecaprenyl diphosphate + 7 diphosphate. Its function is as follows. Catalyzes the sequential condensation of isopentenyl diphosphate (IPP) with geranylgeranyl diphosphate (GGPP) to yield (2Z,6Z,10Z,14Z,18Z,22Z,26Z,30E,34E,38E)-undecaprenyl diphosphate (tritrans,heptacis-UPP). It is probably the precursor of glycosyl carrier lipids. This chain is Tritrans,polycis-undecaprenyl-diphosphate synthase (geranylgeranyl-diphosphate specific), found in Picrophilus torridus (strain ATCC 700027 / DSM 9790 / JCM 10055 / NBRC 100828 / KAW 2/3).